The primary structure comprises 189 residues: Adenylate kinase (189 aa).

10 to 15 (AAGKGT) provides a ligand contact to ATP. The segment at 30–59 (STGDMLRAARASGSELGQRVAKIMDEGGLV) is NMP. Residues Thr-31, Arg-36, 57 to 59 (GLV), 85 to 88 (GFPR), and Gln-92 each bind AMP. The segment at 126 to 136 (KRFEEQGRADD) is LID. Residue Arg-127 participates in ATP binding. 2 residues coordinate AMP: Arg-133 and Arg-144. Gly-172 provides a ligand contact to ATP.

This sequence belongs to the adenylate kinase family. As to quaternary structure, monomer.

The protein localises to the cytoplasm. The enzyme catalyses AMP + ATP = 2 ADP. The protein operates within purine metabolism; AMP biosynthesis via salvage pathway; AMP from ADP: step 1/1. Functionally, catalyzes the reversible transfer of the terminal phosphate group between ATP and AMP. Plays an important role in cellular energy homeostasis and in adenine nucleotide metabolism. This Hyphomonas neptunium (strain ATCC 15444) protein is Adenylate kinase.